Here is a 378-residue protein sequence, read N- to C-terminus: Chlorophyll synthase, chloroplastic (378 aa).

A chloroplast-targeting transit peptide spans 1–45; that stretch reads MATSHPLAAAAATSSSSATFRPPLRFLSSPPSSLTLNRRRSFPVV. The next 7 helical transmembrane spans lie at 173-193, 199-219, 232-252, 257-277, 302-322, 327-347, and 357-377; these read VITQIWVLLLGGLGLGALLDI, FPIIFYLALGGSLLSYIYSAP, FALGASYIGLPWWAGQALFGT, IVVLTCLYSIAGLGIAIVNDF, WICVGAIDITQLSVAAYLLST, YALALLGLTIPQVILQFQYFL, and YQASAQPFFVFGLLVTALATS.

Belongs to the UbiA prenyltransferase family. Chlorophyll synthase subfamily. Mg(2+) is required as a cofactor. The cofactor is Zn(2+). It depends on Mn(2+) as a cofactor.

The protein resides in the plastid. It is found in the chloroplast membrane. The catalysed reaction is phytyl diphosphate + chlorophyllide a + H(+) = chlorophyll a + diphosphate. With respect to regulation, inhibited by N-phenylmaleimide (NPM) and diacetyl. Involved in one of the last steps of the biosynthesis of chlorophyll a. Catalyzes the esterification of chlorophillide a with either geranylgeranyldiphosphate (GGPP) or phytyldiphosphate (PhyPP). May also use with a lower efficiency the monophosphates GGMP and PhyMP, but not the non-phosphorylated alcohols geranylgeraniol and phytol. The tetraprenyl diphosphate must bind to the enzyme as the first substrate and esterification occurs when this pre-loaded enzyme meets the second substrate, chlorophyllide. This Avena sativa (Oat) protein is Chlorophyll synthase, chloroplastic (CHLG).